A 367-amino-acid chain; its full sequence is Alginate lyase (367 aa).

The first 27 residues, 1–27 (MKTSHLIRIALPGALAAALLASQVSQA), serve as a signal peptide directing secretion. Substrate is bound by residues 65–66 (SK), 138–139 (HT), and Tyr-256.

Belongs to the polysaccharide lyase 5 family.

The protein resides in the periplasm. The catalysed reaction is Eliminative cleavage of alginate to give oligosaccharides with 4-deoxy-alpha-L-erythro-hex-4-enuronosyl groups at their non-reducing ends and beta-D-mannuronate at their reducing end.. Catalyzes the depolymerization of alginate by cleaving the beta-1,4 glycosidic bond between two adjacent sugar residues via a beta-elimination mechanism. May serve to degrade mislocalized alginate that is trapped in the periplasmic space. This Pseudomonas aeruginosa (strain LESB58) protein is Alginate lyase.